The following is a 203-amino-acid chain: Probable cytochrome c oxidase subunit 3 (203 aa).

Transmembrane regions (helical) follow at residues 30–50 (IIWL…YFVA), 69–89 (LAVP…MGVF), 102–122 (WYFI…YEYY), 142–162 (ITTG…VFLL), and 179–199 (IVVS…FATI).

This sequence belongs to the cytochrome c oxidase subunit 3 family.

Its subcellular location is the cell membrane. The enzyme catalyses 4 Fe(II)-[cytochrome c] + O2 + 8 H(+)(in) = 4 Fe(III)-[cytochrome c] + 2 H2O + 4 H(+)(out). The protein is Probable cytochrome c oxidase subunit 3 (ctaE) of Nocardia farcinica (strain IFM 10152).